A 310-amino-acid chain; its full sequence is Deoxyribonuclease gamma (310 aa).

A signal peptide spans 1–25; the sequence is MSLYPASPYLASLLLFILALHGALS. Positions 40–56 match the Bipartite nuclear localization signal motif; that stretch reads KKENHNAMDIIVKIIKR. Active-site residues include glutamate 105 and histidine 160. A disulfide bridge connects residues cysteine 199 and cysteine 236. The interval 289–310 is not required for free DNA-nuclease activity but required for activity towards liposome-coated DNA; that stretch reads SRAFTNSRKSVSLKKKKKGSRS. The Nuclear localization signal signature appears at 301–307; it reads LKKKKKG.

The protein belongs to the DNase I family. Monomer. Requires Ca(2+) as cofactor. It depends on Mg(2+) as a cofactor. Seems to be synthesized as an inactive precursor protein and converted into an active mature enzyme by removal of the N-terminal precursor peptide during apoptosis. Post-translationally, poly-ADP-ribosylated by PARP1. ADP-ribosylation negatively regulates enzymatic activity during apoptosis. Detected at high levels in spleen, lymph nodes, thymus and liver. Observed also in kidney and testis, but not in brain or heart.

Its subcellular location is the nucleus. The protein resides in the secreted. Its activity is regulated as follows. Inhibited by zinc. Functionally, has DNA hydrolytic activity. Is capable of both single- and double-stranded DNA cleavage, producing DNA fragments with 3'-OH ends. Can cleave chromatin to nucleosomal units and cleaves nucleosomal and liposome-coated DNA. Acts in internucleosomal DNA fragmentation (INDF) during apoptosis and necrosis. The role in apoptosis includes myogenic and neuronal differentiation, and BCR-mediated clonal deletion of self-reactive B cells. Is active on chromatin in apoptotic cell-derived membrane-coated microparticles and thus suppresses anti-DNA autoimmunity. Together with DNASE1, plays a key role in degrading neutrophil extracellular traps (NETs). NETs are mainly composed of DNA fibers and are released by neutrophils to bind pathogens during inflammation. Degradation of intravascular NETs by DNASE1 and DNASE1L3 is required to prevent formation of clots that obstruct blood vessels and cause organ damage following inflammation. This chain is Deoxyribonuclease gamma (Dnase1l3), found in Rattus norvegicus (Rat).